We begin with the raw amino-acid sequence, 412 residues long: L-threonine:uridine-5'-aldehyde transaldolase (412 aa).

Position 229 is an N6-(pyridoxal phosphate)lysine (Lys229).

It belongs to the SHMT family. Requires pyridoxal 5'-phosphate as cofactor.

The catalysed reaction is uridine-5'-aldehyde + L-threonine = (5'S,6'S)-C-glycyluridine + acetaldehyde. Its pathway is antibiotic biosynthesis. Functionally, transaldolase involved in the biosynthesis of the capuramycin-type nucleoside antibiotic A-102395. Catalyzes the condensation of L-threonine and uridine-5'-aldehyde to form 5'-C-glycyluridine (GlyU). This chain is L-threonine:uridine-5'-aldehyde transaldolase, found in Amycolatopsis sp.